Reading from the N-terminus, the 432-residue chain is 3-phosphoshikimate 1-carboxyvinyltransferase (432 aa).

Positions 23, 24, and 28 each coordinate 3-phosphoshikimate. Lys23 serves as a coordination point for phosphoenolpyruvate. 2 residues coordinate phosphoenolpyruvate: Gly95 and Arg123. 3-phosphoshikimate is bound by residues Ser167, Gln169, Asp316, and Lys343. Gln169 provides a ligand contact to phosphoenolpyruvate. The active-site Proton acceptor is Asp316. Phosphoenolpyruvate contacts are provided by Arg347 and Arg391.

The protein belongs to the EPSP synthase family. Monomer.

It localises to the cytoplasm. It catalyses the reaction 3-phosphoshikimate + phosphoenolpyruvate = 5-O-(1-carboxyvinyl)-3-phosphoshikimate + phosphate. The protein operates within metabolic intermediate biosynthesis; chorismate biosynthesis; chorismate from D-erythrose 4-phosphate and phosphoenolpyruvate: step 6/7. In terms of biological role, catalyzes the transfer of the enolpyruvyl moiety of phosphoenolpyruvate (PEP) to the 5-hydroxyl of shikimate-3-phosphate (S3P) to produce enolpyruvyl shikimate-3-phosphate and inorganic phosphate. This is 3-phosphoshikimate 1-carboxyvinyltransferase from Limosilactobacillus fermentum (strain NBRC 3956 / LMG 18251) (Lactobacillus fermentum).